Reading from the N-terminus, the 168-residue chain is MASKNSASIALFFALNIIFFTLTAATDCGCNPSPKHKPVPSPKPKPVPSPKPKPVPSPSVPSPSVPSPNPRPVTPPRTPGSSGNCPIDALRLGVCANVLSSLLNIQLGQPSAQPCCSLIQGLVDLDAAICLCTALRANVLGINLNVPISLSVLLNVCNRKVPSGFQCA.

Residues 1–25 (MASKNSASIALFFALNIIFFTLTAA) form the signal peptide. The interval 32–81 (PSPKHKPVPSPKPKPVPSPKPKPVPSPSVPSPSVPSPNPRPVTPPRTPGS) is disordered. The stretch at 34-41 (PKHKPVPS) is one A-1 repeat. Residues 34-57 (PKHKPVPSPKPKPVPSPKPKPVPS) form a 3 X 8 AA repeats A of P-K-[HP]-K-P-V-P-S region. Over residues 39–78 (VPSPKPKPVPSPKPKPVPSPSVPSPSVPSPNPRPVTPPRT) the composition is skewed to pro residues. Residues 42–49 (PKPKPVPS) form an A-2 repeat. The A-3 repeat unit spans residues 50–57 (PKPKPVPS). The stretch at 58–62 (PSVPS) is one B-1 repeat. Positions 58 to 67 (PSVPSPSVPS) are 2 X 58 AA tandem repeats B of P-S-V-P-S. Residues 63-67 (PSVPS) form a B-2 repeat.

Belongs to the plant LTP family. PEARLI1 subfamily. In terms of tissue distribution, mostly expressed in aerial part of seedlings, and, to a lower extent, in roots. Higher basal levels in early-flowering ecotypes.

The protein resides in the secreted. The protein localises to the cell wall. Functionally, probable lipid transfer protein (LTP). May improve freezing survival. Seems to control the flowering process and lignin synthesis. Has an auxiliary role for germinability and early seedling development under low temperature and salt stress conditions, probably in an abscisic acid- (ABA) dependent manner. Confers resistance to Botrytis cinerea and exhibits anti-fungal activity, at least against S.cerevisiae, B.cinerea and Fusarium oxysporum, probably by increasing their membrane permeability. The protein is Lipid transfer protein EARLI 1 (EARLI1) of Arabidopsis thaliana (Mouse-ear cress).